An 832-amino-acid chain; its full sequence is Protein P (832 aa).

Residues 1–177 (MPLSYQHFRK…FCGSPYSWEQ (177 aa)) form a terminal protein domain (TP) region. A spacer region spans residues 178–335 (ELQHGAESFN…HCLSHLVNLL (158 aa)). 2 stretches are compositionally biased toward polar residues: residues 205–220 (SKHQ…QQGQ) and 251–263 (SGHN…ESAS). Residues 205–263 (SKHQQSRLGLQPQQGQLAKGQRGRSGSVRSRAHSATRRSVGVEPSGSGHNNNSASESAS) form a disordered region. The interval 336–679 (EDWGPCTEHG…YATLYPVARQ (344 aa)) is polymerase/reverse transcriptase domain (RT). The Reverse transcriptase domain occupies 346 to 589 (KHHIRIPRTP…YSLNFMGYVI (244 aa)). 3 residues coordinate Mg(2+): Asp418, Asp540, and Asp541.

This sequence belongs to the hepadnaviridae P protein family.

It carries out the reaction DNA(n) + a 2'-deoxyribonucleoside 5'-triphosphate = DNA(n+1) + diphosphate. The enzyme catalyses Endonucleolytic cleavage to 5'-phosphomonoester.. Activated by host HSP70 and HSP40 in vitro to be able to bind the epsilon loop of the pgRNA. Because deletion of the RNase H region renders the protein partly chaperone-independent, the chaperones may be needed indirectly to relieve occlusion of the RNA-binding site by this domain. Inhibited by several reverse-transcriptase inhibitors: Lamivudine, Adefovir and Entecavir. Its function is as follows. Multifunctional enzyme that converts the viral RNA genome into dsDNA in viral cytoplasmic capsids. This enzyme displays a DNA polymerase activity that can copy either DNA or RNA templates, and a ribonuclease H (RNase H) activity that cleaves the RNA strand of RNA-DNA heteroduplexes in a partially processive 3'- to 5'-endonucleasic mode. Neo-synthesized pregenomic RNA (pgRNA) are encapsidated together with the P protein, and reverse-transcribed inside the nucleocapsid. Initiation of reverse-transcription occurs first by binding the epsilon loop on the pgRNA genome, and is initiated by protein priming, thereby the 5'-end of (-)DNA is covalently linked to P protein. Partial (+)DNA is synthesized from the (-)DNA template and generates the relaxed circular DNA (RC-DNA) genome. After budding and infection, the RC-DNA migrates in the nucleus, and is converted into a plasmid-like covalently closed circular DNA (cccDNA). The activity of P protein does not seem to be necessary for cccDNA generation, and is presumably released from (+)DNA by host nuclear DNA repair machinery. The chain is Protein P from Gorilla gorilla (western gorilla).